Consider the following 59-residue polypeptide: Putative conotoxin (59 aa).

The signal sequence occupies residues 1–25; it reads MGMRMMFTVFLLVVLATTVVPITLA. The propeptide occupies 26-47; that stretch reads SATDGRNAAANARVSPVISKSS.

It belongs to the conotoxin A superfamily. Expressed by the venom duct.

It localises to the secreted. In terms of biological role, acts as a neurotoxin. The sequence is that of Putative conotoxin from Conus imperialis (Imperial cone).